A 406-amino-acid polypeptide reads, in one-letter code: Probable endo-xylogalacturonan hydrolase A (406 aa).

The first 18 residues, 1 to 18 (MISLNSIFLLSLVGLSRA), serve as a signal peptide directing secretion. Residues 20-49 (PSRSETSPDRTIKPRAACTPTAGGSSSTDD) are disordered. PbH1 repeat units follow at residues 183 to 213 (TSNA…DIGA), 214 to 235 (STYV…AFKP), 237 to 257 (ANYV…SVGS), 266 to 289 (VQNV…KTYP), 299 to 320 (VKNA…QIQS), and 368 to 390 (TCDV…ILCG). The Proton donor role is filled by aspartate 228. N-linked (GlcNAc...) asparagine glycosylation is present at asparagine 244. Residue histidine 251 is part of the active site. N-linked (GlcNAc...) asparagine glycosylation is found at asparagine 273, asparagine 278, and asparagine 301.

This sequence belongs to the glycosyl hydrolase 28 family.

It localises to the secreted. Its function is as follows. Pectinolytic enzyme involved in the degradation of xylogalacturonan (xga), a galacturonan backbone heavily substituted with xylose, and which is one important component of the hairy regions of pectin. Activity requires a galacturonic acid backbone substituted with xylose. This Aspergillus oryzae (strain ATCC 42149 / RIB 40) (Yellow koji mold) protein is Probable endo-xylogalacturonan hydrolase A (xghA).